Reading from the N-terminus, the 120-residue chain is Glycine cleavage system H protein (120 aa).

The 83-residue stretch at 17-99 (VATVGITAHA…MGAGWFFKLK (83 aa)) folds into the Lipoyl-binding domain. N6-lipoyllysine is present on K58.

This sequence belongs to the GcvH family. The glycine cleavage system is composed of four proteins: P, T, L and H. The cofactor is (R)-lipoate.

The glycine cleavage system catalyzes the degradation of glycine. The H protein shuttles the methylamine group of glycine from the P protein to the T protein. The protein is Glycine cleavage system H protein of Rhizobium rhizogenes (strain K84 / ATCC BAA-868) (Agrobacterium radiobacter).